The following is a 403-amino-acid chain: Argininosuccinate synthase (403 aa).

ATP is bound by residues 13 to 21 (AYSGGLDTS) and Ala40. L-citrulline-binding residues include Tyr92 and Ser97. Residue Gly122 participates in ATP binding. 3 residues coordinate L-aspartate: Thr124, Asn128, and Asp129. Residue Asn128 coordinates L-citrulline. L-citrulline contacts are provided by Arg132, Ser181, Ser190, Glu266, and Tyr278.

This sequence belongs to the argininosuccinate synthase family. Type 1 subfamily. As to quaternary structure, homotetramer.

It is found in the cytoplasm. It catalyses the reaction L-citrulline + L-aspartate + ATP = 2-(N(omega)-L-arginino)succinate + AMP + diphosphate + H(+). It participates in amino-acid biosynthesis; L-arginine biosynthesis; L-arginine from L-ornithine and carbamoyl phosphate: step 2/3. The sequence is that of Argininosuccinate synthase from Aliivibrio fischeri (strain ATCC 700601 / ES114) (Vibrio fischeri).